Reading from the N-terminus, the 333-residue chain is Structure-specific endonuclease subunit SLX1 homolog (333 aa).

The GIY-YIG domain occupies 68 to 157; the sequence is DFFGVYCLLS…KSRRLRLLNL (90 aa). The SLX1-type zinc finger occupies 237-293; sequence CSLCLKPILSISELLRCHANETCKSHFHMRCLSKHALNAVDEYRTSLFPIQGQCPKC.

It belongs to the SLX1 family. In terms of assembly, forms a heterodimer with a member of the SLX4 family. The cofactor is a divalent metal cation.

The protein resides in the nucleus. Catalytic subunit of a heterodimeric structure-specific endonuclease that resolves DNA secondary structures generated during DNA repair and recombination. Has endonuclease activity towards branched DNA substrates, introducing single-strand cuts in duplex DNA close to junctions with ss-DNA. The chain is Structure-specific endonuclease subunit SLX1 homolog from Brugia malayi (Filarial nematode worm).